The following is a 93-amino-acid chain: UPF0147 protein PF0239 (93 aa).

The protein belongs to the UPF0147 family.

This is UPF0147 protein PF0239 from Pyrococcus furiosus (strain ATCC 43587 / DSM 3638 / JCM 8422 / Vc1).